The chain runs to 1837 residues: Nucleoporin nup211 (1837 aa).

Coiled coils occupy residues 59–378 (EVNY…YDEI), 415–519 (YKQK…ELDL), and 559–625 (VFRN…QLRY). A Phosphothreonine modification is found at Thr-650. Coiled coils occupy residues 661–1163 (EQTS…NKLL), 1222–1637 (LDNR…ENTH), and 1675–1712 (KAKI…PEKT). The segment at 1464-1521 (KDSNHQLQESASSDAEQITKEQFEQLKSEKERTEKELADSKNELEHLQSEAVDADGKT) is disordered. Residues 1468 to 1479 (HQLQESASSDAE) show a composition bias toward polar residues. Residues 1480–1521 (QITKEQFEQLKSEKERTEKELADSKNELEHLQSEAVDADGKT) are compositionally biased toward basic and acidic residues. The residue at position 1558 (Ser-1558) is a Phosphoserine. Thr-1560 carries the phosphothreonine modification. Ser-1563 bears the Phosphoserine mark. Disordered regions lie at residues 1602-1642 (EKEK…NIDD) and 1700-1837 (ENLN…KKAK). The segment covering 1617–1628 (KSQRIKELEEQA) has biased composition (basic and acidic residues). 4 stretches are compositionally biased toward polar residues: residues 1700-1730 (ENLN…SKPT), 1753-1763 (KSLSARLQGTG), 1795-1814 (IATS…TAKS), and 1827-1837 (GGSSSNQKKAK).

The protein resides in the cytoplasm. It localises to the nucleus. Functionally, functions as a component of the nuclear pore complex (NPC). NPC components, collectively referred to as nucleoporins (NUPs), can play the role of both NPC structural components and of docking or interaction partners for transiently associated nuclear transport factors. Active directional transport is assured by both, a Phe-Gly (FG) repeat affinity gradient for these transport factors across the NPC and a transport cofactor concentration gradient across the nuclear envelope. In Schizosaccharomyces pombe (strain 972 / ATCC 24843) (Fission yeast), this protein is Nucleoporin nup211 (nup211).